Consider the following 406-residue polypeptide: L-cysteine:1D-myo-inositol 2-amino-2-deoxy-alpha-D-glucopyranoside ligase (406 aa).

Cys-45 provides a ligand contact to Zn(2+). L-cysteinyl-5'-AMP contacts are provided by residues 45-48 (CGIT), Thr-60, and 83-85 (NIT). Positions 47-57 (ITPYDATHMGH) match the 'HIGH' region motif. Residues 185-190 (ERGGDP) carry the 'ERGGDP' region motif. Position 225 (Trp-225) interacts with L-cysteinyl-5'-AMP. Residue Cys-229 coordinates Zn(2+). An L-cysteinyl-5'-AMP-binding site is contributed by 247–249 (GSD). Zn(2+) is bound at residue His-254. Val-281 provides a ligand contact to L-cysteinyl-5'-AMP. Positions 287 to 291 (KMSKS) match the 'KMSKS' region motif.

It belongs to the class-I aminoacyl-tRNA synthetase family. MshC subfamily. As to quaternary structure, monomer. Zn(2+) is required as a cofactor.

It carries out the reaction 1D-myo-inositol 2-amino-2-deoxy-alpha-D-glucopyranoside + L-cysteine + ATP = 1D-myo-inositol 2-(L-cysteinylamino)-2-deoxy-alpha-D-glucopyranoside + AMP + diphosphate + H(+). In terms of biological role, catalyzes the ATP-dependent condensation of GlcN-Ins and L-cysteine to form L-Cys-GlcN-Ins. The sequence is that of L-cysteine:1D-myo-inositol 2-amino-2-deoxy-alpha-D-glucopyranoside ligase from Kribbella flavida (strain DSM 17836 / JCM 10339 / NBRC 14399).